Here is a 79-residue protein sequence, read N- to C-terminus: uncharacterized protein (79 aa).

Residues 20–52 (TERGAGLSPAAPPDPSPAIAPTMAEGGVPSPGP) form a disordered region.

This is an uncharacterized protein from Homo sapiens (Human).